A 1029-amino-acid polypeptide reads, in one-letter code: Tyrosine-protein kinase-like otk (1029 aa).

Residues methionine 1–alanine 18 form the signal peptide. Topologically, residues serine 19–alanine 577 are extracellular. 5 consecutive Ig-like C2-type domains span residues serine 21 to serine 110, leucine 109 to serine 195, proline 247 to serine 361, proline 364 to asparagine 459, and proline 464 to valine 554. Asparagine 35 carries N-linked (GlcNAc...) asparagine glycosylation. 4 disulfide bridges follow: cysteine 42/cysteine 91, cysteine 133/cysteine 184, cysteine 272/cysteine 350, and cysteine 395/cysteine 443. 7 N-linked (GlcNAc...) asparagine glycosylation sites follow: asparagine 332, asparagine 413, asparagine 425, asparagine 440, asparagine 453, asparagine 508, and asparagine 520. A disulfide bridge connects residues cysteine 486 and cysteine 538. The helical transmembrane segment at valine 578–tryptophan 598 threads the bilayer. Over cysteine 599 to lysine 1029 the chain is Cytoplasmic. 2 disordered regions span residues leucine 613–alanine 675 and serine 714–methionine 756. Positions lysine 651–arginine 669 are enriched in polar residues. Position 674 is a phosphoserine (serine 674). Residues leucine 688–methionine 1024 enclose the Protein kinase; inactive domain. Over residues serine 716 to serine 727 the composition is skewed to basic and acidic residues.

It belongs to the protein kinase superfamily. Tyr protein kinase family. Insulin receptor subfamily. As to quaternary structure, interacts with plexA; component of a receptor complex that mediates the repulsive signaling in response to Semaphorin ligands.

It is found in the cell membrane. Its function is as follows. Acts as a calcium-dependent, homophilic cell adhesion molecule that regulates neural recognition during the development of the nervous system. Component of the repulsive Plexin signaling response to regulate motor axon guidance at the embryonic stage. Also component of a receptor complex that is required in the adult visual system to innervate the lamina layer; specific targeting of R1-R6 axons. The polypeptide is Tyrosine-protein kinase-like otk (Drosophila simulans (Fruit fly)).